The primary structure comprises 297 residues: Trans-enoyl reductase TOXD (297 aa).

NADP(+)-binding positions include 162 to 165 (STAT) and Y203.

Belongs to the zinc-containing alcohol dehydrogenase family. Monomer.

In terms of biological role, trans-enoyl reductase; part of the diffuse TOX2 gene cluster that mediates the biosynthesis of the HC-toxin, cyclic tetrapeptide of structure cyclo(D-Pro-L-Ala-D-Ala-L-Aeo), where Aeo stands for 2-amino-9,10-epoxi-8-oxodecanoic acid. HC-toxin is a determinant of specificity and virulence in the interaction between the producing fungus and its host, maize. TOXD does not seem to play a role in HC-toxin biosynthesis. The polypeptide is Trans-enoyl reductase TOXD (Cochliobolus carbonum (Maize leaf spot fungus)).